Here is a 657-residue protein sequence, read N- to C-terminus: MESLKRAWNQLVYTFSTEDRYAEYTPQGSTNVVGGEPFDTSNASRIQLNEFVDGAEVGGNDGVSECLLAWRHIDSWCSEHNPDLYATLSSPCTNNDIMWAEKDLAITFPAAVRASLRTHDGQEDVESMQGASGLIYGLKLMGLEEVVIMTRTWRNVAANLQRQMARMEQQQRAKSSSELPQTVTPQAVKQKGYGKVDNQDYHANPHLQKDISQNYNKQFKLDKLPKQGSIPPLAIQPVYAHPGWIPLVTDHAGNHIGVDLAPGPKGKYAQVILFGREFDTKFVVADNWGDFLLGFVNDLEKGNWLLVDNTDDYLNGEGDLVFVDHATRGPILNYLAVLKKRSWEKWQSTKPTQPLTSASVASFSTSSSVVNRPTPADAAGQARKTQGYSPMVPGASSNESVSFIPDSDVIMEESNLTQTDASSKGTTKPATPNPMTAPTVIRVSTPGSPSAAAEAPEPPKKATPPKAAKETKTPTVTKESTPASDANVDTELDSKNTETNEDTRATNTAHSMAPTVSSAITDLTAIDEPVATAGKPKDTEKTDDAKDVHEANKQDLTKANEAEAEENAVEPKDNEVSADSKVKARAESKSDHDSKTNNIPEKKVPQVTAKALPESDRGQASDAASTKSDKKAKPAEDPKEHDLKIEKLNEDFETVAL.

Disordered regions lie at residues glutamate 168–tyrosine 193, serine 366–serine 402, and leucine 416–leucine 657. Polar residues predominate over residues lysine 174–alanine 187. A compositionally biased stretch (polar residues) spans leucine 416–threonine 436. Composition is skewed to low complexity over residues serine 444–alanine 455 and threonine 473–proline 482. Residues leucine 492–arginine 504 show a composition bias toward basic and acidic residues. Residues alanine 505 to threonine 521 are compositionally biased toward polar residues. Composition is skewed to basic and acidic residues over residues lysine 535 to glutamate 561, valine 569 to valine 604, and lysine 627 to glutamate 650.

The protein belongs to the KNR4/SMI1 family.

The chain is KNR4/SMI1 homolog from Eremothecium gossypii (strain ATCC 10895 / CBS 109.51 / FGSC 9923 / NRRL Y-1056) (Yeast).